The chain runs to 229 residues: 2,3-bisphosphoglycerate-dependent phosphoglycerate mutase (229 aa).

Residues 8–15 (RHGESAWN), 21–22 (TG), Arg60, 87–90 (ERHY), Lys98, 114–115 (RR), and 183–184 (GN) each bind substrate. Residue His9 is the Tele-phosphohistidine intermediate of the active site. Glu87 acts as the Proton donor/acceptor in catalysis.

It belongs to the phosphoglycerate mutase family. BPG-dependent PGAM subfamily. Homodimer.

It catalyses the reaction (2R)-2-phosphoglycerate = (2R)-3-phosphoglycerate. It participates in carbohydrate degradation; glycolysis; pyruvate from D-glyceraldehyde 3-phosphate: step 3/5. Its function is as follows. Catalyzes the interconversion of 2-phosphoglycerate and 3-phosphoglycerate. The polypeptide is 2,3-bisphosphoglycerate-dependent phosphoglycerate mutase (Polynucleobacter asymbioticus (strain DSM 18221 / CIP 109841 / QLW-P1DMWA-1) (Polynucleobacter necessarius subsp. asymbioticus)).